The sequence spans 443 residues: Phosphomevalonate kinase ERG8 (443 aa).

Position 160 to 170 (160 to 170 (ANKTGLGSSAA)) interacts with ATP.

Belongs to the GHMP kinase family. Mevalonate kinase subfamily.

The enzyme catalyses (R)-5-phosphomevalonate + ATP = (R)-5-diphosphomevalonate + ADP. Its pathway is isoprenoid biosynthesis; isopentenyl diphosphate biosynthesis via mevalonate pathway; isopentenyl diphosphate from (R)-mevalonate: step 2/3. In terms of biological role, phosphomevalonate kinase; part of the second module of ergosterol biosynthesis pathway that includes the middle steps of the pathway. ERG8 converts 5-phosphomevalonate to 5-diphosphomevalonate. The second module is carried out in the vacuole and involves the formation of farnesyl diphosphate, which is also an important intermediate in the biosynthesis of ubiquinone, dolichol, heme and prenylated proteins. Activity by the mevalonate kinase ERG12 (FG05912) first converts mevalonate into 5-phosphomevalonate. 5-phosphomevalonate is then further converted to 5-diphosphomevalonate by the phosphomevalonate kinase ERG8 (FG09764). The diphosphomevalonate decarboxylase ERG19 (FG10424) then produces isopentenyl diphosphate. The isopentenyl-diphosphate delta-isomerase IDI1 (FG09722) then catalyzes the 1,3-allylic rearrangement of the homoallylic substrate isopentenyl (IPP) to its highly electrophilic allylic isomer, dimethylallyl diphosphate (DMAPP). Finally the farnesyl diphosphate synthase ERG20 (FG06784) catalyzes the sequential condensation of isopentenyl pyrophosphate with dimethylallyl pyrophosphate, and then with the resultant geranylpyrophosphate to the ultimate product farnesyl pyrophosphate. The protein is Phosphomevalonate kinase ERG8 of Gibberella zeae (strain ATCC MYA-4620 / CBS 123657 / FGSC 9075 / NRRL 31084 / PH-1) (Wheat head blight fungus).